The sequence spans 102 residues: Small ribosomal subunit protein uS10 (102 aa).

The protein belongs to the universal ribosomal protein uS10 family. As to quaternary structure, part of the 30S ribosomal subunit.

In terms of biological role, involved in the binding of tRNA to the ribosomes. The chain is Small ribosomal subunit protein uS10 from Nitrosopumilus maritimus (strain SCM1).